The sequence spans 278 residues: DNA repair protein RecO (278 aa).

The segment covering 1-12 (MGTNDALTSTED) has biased composition (polar residues). The interval 1-42 (MGTNDALTSTEDAVTAGANDAPLPAPPEPPRKARRATSRTSD) is disordered.

It belongs to the RecO family.

Involved in DNA repair and RecF pathway recombination. This chain is DNA repair protein RecO, found in Burkholderia lata (strain ATCC 17760 / DSM 23089 / LMG 22485 / NCIMB 9086 / R18194 / 383).